The primary structure comprises 53 residues: Metallothionein (53 aa).

The protein belongs to the metallothionein superfamily. Type 14 family.

Its function is as follows. This protein complexes cadmium, zinc and copper. This chain is Metallothionein, found in Synechococcus sp.